The sequence spans 459 residues: ATP synthase subunit beta (459 aa).

149 to 156 (GGAGVGKT) provides a ligand contact to ATP.

Belongs to the ATPase alpha/beta chains family. F-type ATPases have 2 components, CF(1) - the catalytic core - and CF(0) - the membrane proton channel. CF(1) has five subunits: alpha(3), beta(3), gamma(1), delta(1), epsilon(1). CF(0) has three main subunits: a(1), b(2) and c(9-12). The alpha and beta chains form an alternating ring which encloses part of the gamma chain. CF(1) is attached to CF(0) by a central stalk formed by the gamma and epsilon chains, while a peripheral stalk is formed by the delta and b chains.

The protein localises to the cell inner membrane. It carries out the reaction ATP + H2O + 4 H(+)(in) = ADP + phosphate + 5 H(+)(out). In terms of biological role, produces ATP from ADP in the presence of a proton gradient across the membrane. The catalytic sites are hosted primarily by the beta subunits. The chain is ATP synthase subunit beta from Pseudomonas savastanoi pv. phaseolicola (strain 1448A / Race 6) (Pseudomonas syringae pv. phaseolicola (strain 1448A / Race 6)).